An 841-amino-acid chain; its full sequence is MMARARLAAALIPATAILSCLRTESWDPCVQVVPNISYQCMELNLYKIPDNIPISTKMLDLSFNYLRHLGSHNFSSFPELQVLDLSRCEIKIIEDDTFQGLNHLSTLILTGNPIQSLAWGAFSGLSSLQKLVAVETNLVSLNDFPIGHLKNLKELNVAHNFIHSFKLPEYFSNLPNLEHLDLSNNKIQNIYYEDVKVLHQMPLLNLSLDLSLNPLDFIEPGTFKEIKLNGLTLRSNFNSSHVMKTCIQGLAGLKTNRLVLGEFKNERKLQRFDRSFLEGLCNLTIEQFRIAYLDKFSGDDTDLFNCLANVSVISLLSISLGSLQALLKDFRWQHLEIINCDFDKFPALKLSSLKKFVFTDNKDISTFTEFQLPSLQYLDLKRNHLSFKGCCSHTDFGTTNLKHLDLSFNDVITLGSNFMGLEQLEHLDFQHSTLKQINAFSAFLSLRNLRYLDISYTNIRIVFHGIFTGLVSLQTLKMAGNSFQNNLLPDIFTELTNLTVLDLSKCQLEQVAQTAFHSLSSLQVLNMSHNKLLSLDTFLYEPLHSLRILDCSFNRIMASKEQELQNLPRSLTWLNLTQNAFACVCEHQSFLQWVKDQRQLLVGAEQMMCAEPLDMEDMPVLSFRNATCQLSKTIISVSVVTVLLVSVVGVLVYKFYFHLMLLAGCKKYGRGESIYDAFVIYSSQDEDWVRNELVKNLEEGVPPFQLCLHYRDFIPGVAIAANIIQEGFHKSRKVIVVVSQHFIQSRWCIFEYEIAQTWQFLSSRAGIIFIVLQKLEKSLLRQQVELYRLLSRNTYLEWEDSVLGRHVFWRRLRKALLAGKPQSPEGTADAETNPQEATTST.

An N-terminal signal peptide occupies residues 1 to 23 (MMARARLAAALIPATAILSCLRT). Over 24–632 (ESWDPCVQVV…FRNATCQLSK (609 aa)) the chain is Extracellular. A disulfide bond links Cys-29 and Cys-40. Asn-35 and Asn-73 each carry an N-linked (GlcNAc...) asparagine glycan. LRR repeat units lie at residues 55–76 (STKMLDLSFNYLRHLGSHNFSS), 79–100 (ELQVLDLSRCEIKIIEDDTFQG), 103–124 (HLSTLILTGNPIQSLAWGAFSG), 127–148 (SLQKLVAVETNLVSLNDFPIGH), 151–172 (NLKELNVAHNFIHSFKLPEYFS), 176–197 (NLEHLDLSNNKIQNIYYEDVKV), and 205–225 (NLSLDLSLNPLDFIEPGTFKE). Residues Asn-205, Asn-238, Asn-282, and Asn-309 are each glycosylated (N-linked (GlcNAc...) asparagine). Cysteines 281 and 306 form a disulfide. LRR repeat units lie at residues 352–373 (SLKKFVFTDNKDISTFTEFQLP), 374–394 (SLQYLDLKRNHLSFKGCCSHT), 400–422 (NLKHLDLSFNDVITLGSNFMGLE), 423–444 (QLEHLDFQHSTLKQINAFSAFL), 448–469 (NLRYLDISYTNIRIVFHGIFTG), 472–495 (SLQTLKMAGNSFQNNLLPDIFTEL), 497–518 (NLTVLDLSKCQLEQVAQTAFHS), 521–542 (SLQVLNMSHNKLLSLDTFLYEP), and 545–568 (SLRILDCSFNRIMASKEQELQNLP). An intrachain disulfide couples Cys-390 to Cys-391. Asn-497 and Asn-526 each carry an N-linked (GlcNAc...) asparagine glycan. Asn-575 is a glycosylation site (N-linked (GlcNAc...) asparagine). The LRRCT domain occupies 579-630 (NAFACVCEHQSFLQWVKDQRQLLVGAEQMMCAEPLDMEDMPVLSFRNATCQL). 2 cysteine pairs are disulfide-bonded: Cys-583–Cys-609 and Cys-585–Cys-628. N-linked (GlcNAc...) asparagine glycosylation occurs at Asn-625. Residues 633–653 (TIISVSVVTVLLVSVVGVLVY) traverse the membrane as a helical segment. Over 654 to 841 (KFYFHLMLLA…TNPQEATTST (188 aa)) the chain is Cytoplasmic. A TIR domain is found at 673-816 (SIYDAFVIYS…VFWRRLRKAL (144 aa)). A disordered region spans residues 820–841 (KPQSPEGTADAETNPQEATTST). Polar residues predominate over residues 830–841 (AETNPQEATTST).

It belongs to the Toll-like receptor family. In terms of assembly, belongs to the lipopolysaccharide (LPS) receptor, a multi-protein complex containing at least CD14, LY96 and TLR4. Binding to bacterial LPS leads to homodimerization. Interacts with LY96 via the extracellular domain. Interacts with MYD88 and TIRAP via their respective TIR domains. Interacts with TICAM2. Interacts with NOX4. Interacts with CNPY3 and HSP90B1; this interaction is required for proper folding in the endoplasmic reticulum. Interacts with MAP3K21; this interaction leads to negative regulation of TLR4 signaling. Interacts with CD36, following CD36 stimulation by oxLDL or amyloid-beta 42, and forms a heterodimer with TLR6. The trimeric complex is internalized and triggers inflammatory response. LYN kinase activity facilitates TLR4-TLR6 heterodimerization and signal initiation. Interacts with TICAM1 in response to LPS in a WDFY1-dependent manner. Interacts with WDFY1 in response to LPS. Interacts with SMPDL3B. Interacts with CEACAM1; upon lipopolysaccharide stimulation, forms a complex including TLR4 and the phosphorylated form of SYK and CEACAM1, which in turn, recruits PTPN6 that dephosphorylates SYK, reducing the production of reactive oxygen species (ROS) and lysosome disruption, which in turn, reduces the activity of the inflammasome. Interacts with RFTN1; the interaction occurs in response to lipopolysaccharide stimulation. Interacts with SCIMP; the interaction occurs in response to lipopolysaccharide stimulation and is enhanced by phosphorylation of SCIMP by LYN. This interaction facilitates the phosphorylation of TLR4 by LYN which elicits a selective cytokine response in macrophages. Interacts with TRAF3IP3. Interacts with TREM1; this interaction enhances TLR4-mediated inflammatory response. Interacts with ZG16B/PAUF. Interacts with CD82; this interaction inhibits TLR4-mediated signaling pathway. In terms of processing, phosphorylated on tyrosine residues by LYN after binding lipopolysaccharide. Post-translationally, ubiquitinated by RNF128 via 'Lys-28'-linked polyubiquitin chains, leading to proteasomal degradation.

The protein resides in the cell membrane. Its subcellular location is the early endosome. It is found in the cell projection. The protein localises to the ruffle. Transmembrane receptor that functions as a pattern recognition receptor recognizing pathogen- and damage-associated molecular patterns (PAMPs and DAMPs) to induce innate immune responses via downstream signaling pathways. At the plasma membrane, cooperates with LY96 to mediate the innate immune response to bacterial lipopolysaccharide (LPS). Also involved in LPS-independent inflammatory responses triggered by free fatty acids, such as palmitate, and Ni(2+). Mechanistically, acts via MYD88, TIRAP and TRAF6, leading to NF-kappa-B activation, cytokine secretion and the inflammatory response. Alternatively, CD14-mediated TLR4 internalization via endocytosis is associated with the initiation of a MYD88-independent signaling via the TICAM1-TBK1-IRF3 axis leading to type I interferon production. In addition to the secretion of proinflammatory cytokines, initiates the activation of NLRP3 inflammasome and formation of a positive feedback loop between autophagy and NF-kappa-B signaling cascade. In complex with TLR6, promotes inflammation in monocytes/macrophages by associating with TLR6 and the receptor CD86. Upon ligand binding, such as oxLDL or amyloid-beta 42, the TLR4:TLR6 complex is internalized and triggers inflammatory response, leading to NF-kappa-B-dependent production of CXCL1, CXCL2 and CCL9 cytokines, via MYD88 signaling pathway, and CCL5 cytokine, via TICAM1 signaling pathway. In myeloid dendritic cells, vesicular stomatitis virus glycoprotein G but not LPS promotes the activation of IRF7, leading to type I IFN production in a CD14-dependent manner. This chain is Toll-like receptor 4 (TLR4), found in Bos taurus (Bovine).